A 509-amino-acid polypeptide reads, in one-letter code: tRNA (guanine(37)-N(1))-methyltransferase (509 aa).

Residues His-289, 327–328, 355–356, and Asn-387 each bind S-adenosyl-L-methionine; these read DL and DG. A disordered region spans residues 478-509; that stretch reads TRNPENHEDPPLKRQRTAEAFSDEKTQIVSNT.

The protein belongs to the class I-like SAM-binding methyltransferase superfamily. TRM5/TYW2 family. In terms of assembly, monomer.

It localises to the mitochondrion matrix. The protein localises to the nucleus. It is found in the cytoplasm. It carries out the reaction guanosine(37) in tRNA + S-adenosyl-L-methionine = N(1)-methylguanosine(37) in tRNA + S-adenosyl-L-homocysteine + H(+). In terms of biological role, involved in mitochondrial tRNA methylation. Specifically methylates the N1 position of guanosine-37 in various tRNAs. Methylation is not dependent on the nature of the nucleoside 5' of the target nucleoside. This is the first step in the biosynthesis of wybutosine (yW), a modified base adjacent to the anticodon of tRNAs and required for accurate decoding. The chain is tRNA (guanine(37)-N(1))-methyltransferase from Homo sapiens (Human).